A 577-amino-acid chain; its full sequence is Arginine--tRNA ligase (577 aa).

Positions 122 to 132 (PNVAKEMHVGH) match the 'HIGH' region motif.

Belongs to the class-I aminoacyl-tRNA synthetase family. Monomer.

The protein resides in the cytoplasm. The catalysed reaction is tRNA(Arg) + L-arginine + ATP = L-arginyl-tRNA(Arg) + AMP + diphosphate. The sequence is that of Arginine--tRNA ligase from Salmonella dublin (strain CT_02021853).